The primary structure comprises 192 residues: Superoxide dismutase [Fe] (192 aa).

4 residues coordinate Fe cation: H26, H73, D157, and H161.

The protein belongs to the iron/manganese superoxide dismutase family. As to quaternary structure, homodimer. Requires Fe cation as cofactor.

The catalysed reaction is 2 superoxide + 2 H(+) = H2O2 + O2. Functionally, destroys superoxide anion radicals which are normally produced within the cells and which are toxic to biological systems. The polypeptide is Superoxide dismutase [Fe] (Pseudoalteromonas translucida (strain TAC 125)).